We begin with the raw amino-acid sequence, 26 residues long: NFKQIIKMIQCTNTRPWXNFLDYGCY.

Contains 7 disulfide bonds. Expressed by the venom gland.

Its subcellular location is the secreted. In Micrurus pyrrhocryptus (Coral snake), this protein is Phospholipase A2 homolog A1.